Here is a 409-residue protein sequence, read N- to C-terminus: Pentatricopeptide repeat-containing protein At1g01970 (409 aa).

PPR repeat units lie at residues 164–198 (NARD…GFLI), 199–233 (DQVT…GEPL), 234–268 (DYRS…EICA), 269–303 (GREV…GITP), 304–338 (DVKL…GIKA), and 339–373 (TDKC…SIML).

The protein belongs to the PPR family. P subfamily.

This chain is Pentatricopeptide repeat-containing protein At1g01970, found in Arabidopsis thaliana (Mouse-ear cress).